The following is a 429-amino-acid chain: MSKSLQAIRGMNDILPEQTPLWRYFESTVARLLDNYGYKQIRMPIVEFTELFKRSIGEVTDIVEKEMYTFEDRNGDSLTLRPEGTAACVRAVLEHGLTGGGQPQKLWYIGPMFRHERPQKGRYRQFHQIGLEVFNLDGPDIDAELIVLTWRLWGVLGIRDAVKLELNSLGTSESRGRYRVALVEYLSAHLDKLDEDSQRRLKTNPLRVLDTKNADTQAVLVNAPKMADYLDDESRTHFEGLKARLDAAGIPYVINPKLVRGLDYYSKTVFEWVTEKLGAQGTVCAGGRYDGLVEQMGGKPTTGVGFAMGIERLILLLETLEQVPEEISRQVDVYLCAFGEAAELAALALSEKVRDQLPNLRLQINAGAGSFKSQFKKADKSGALYALILGEDELAQQVIGFKPLRGQGEQQNIAFDALAAHLATCVVQG.

This sequence belongs to the class-II aminoacyl-tRNA synthetase family. In terms of assembly, homodimer.

The protein localises to the cytoplasm. It carries out the reaction tRNA(His) + L-histidine + ATP = L-histidyl-tRNA(His) + AMP + diphosphate + H(+). This Pseudomonas fluorescens (strain SBW25) protein is Histidine--tRNA ligase.